We begin with the raw amino-acid sequence, 126 residues long: Glycine cleavage system H protein (126 aa).

The Lipoyl-binding domain occupies 24–105 (TLTVGITDHA…AYGVWLFKIK (82 aa)). Lys-65 carries the post-translational modification N6-lipoyllysine.

The protein belongs to the GcvH family. As to quaternary structure, the glycine cleavage system is composed of four proteins: P, T, L and H. Requires (R)-lipoate as cofactor.

Functionally, the glycine cleavage system catalyzes the degradation of glycine. The H protein shuttles the methylamine group of glycine from the P protein to the T protein. The sequence is that of Glycine cleavage system H protein from Burkholderia cenocepacia (strain ATCC BAA-245 / DSM 16553 / LMG 16656 / NCTC 13227 / J2315 / CF5610) (Burkholderia cepacia (strain J2315)).